Consider the following 242-residue polypeptide: DnaJ homolog subfamily B member 6 (242 aa).

In terms of domain architecture, J spans glutamate 3–glycine 69.

As to quaternary structure, homooligomer.

It localises to the cytoplasm. The protein resides in the perinuclear region. Its subcellular location is the nucleus. Its function is as follows. Has a stimulatory effect on the ATPase activity of HSP70 in a dose-dependent and time-dependent manner and hence acts as a co-chaperone of HSP70. Plays an indispensable role in the organization of KRT8/KRT18 filaments. Acts as an endogenous molecular chaperone for neuronal proteins including huntingtin. Suppresses aggregation and toxicity of polyglutamine-containing, aggregation-prone proteins. Also reduces cellular toxicity and caspase-3 activity. In Xenopus tropicalis (Western clawed frog), this protein is DnaJ homolog subfamily B member 6.